The following is a 182-amino-acid chain: uncharacterized protein (182 aa).

Residues 151–172 (RGPGKPFADEKPCPRERPPADQ) form a disordered region. Positions 157-169 (FADEKPCPRERPP) are enriched in basic and acidic residues.

This is an uncharacterized protein from Mycobacterium tuberculosis (strain CDC 1551 / Oshkosh).